The sequence spans 570 residues: Periplasmic trehalase (570 aa).

A signal peptide spans Met-1–Ala-34. Substrate is bound by residues Arg-159, Trp-166–Asp-167, Asn-203, Arg-212–Gln-214, Arg-284–Glu-286, and Gly-317. Catalysis depends on proton donor/acceptor residues Asp-319 and Glu-503. Glu-518 provides a ligand contact to substrate. Residues Lys-544 to Gln-570 are disordered. Residues Pro-554–Gln-570 are compositionally biased toward low complexity.

The protein belongs to the glycosyl hydrolase 37 family. Monomer.

It localises to the periplasm. The enzyme catalyses alpha,alpha-trehalose + H2O = alpha-D-glucose + beta-D-glucose. Functionally, provides the cells with the ability to utilize trehalose at high osmolarity by splitting it into glucose molecules that can subsequently be taken up by the phosphotransferase-mediated uptake system. The protein is Periplasmic trehalase of Salmonella typhimurium (strain LT2 / SGSC1412 / ATCC 700720).